We begin with the raw amino-acid sequence, 318 residues long: Ribosomal RNA small subunit methyltransferase H (318 aa).

S-adenosyl-L-methionine contacts are provided by residues 42–44 (GGH), Asp-62, Phe-86, Asp-108, and Gln-115.

This sequence belongs to the methyltransferase superfamily. RsmH family.

It localises to the cytoplasm. The catalysed reaction is cytidine(1402) in 16S rRNA + S-adenosyl-L-methionine = N(4)-methylcytidine(1402) in 16S rRNA + S-adenosyl-L-homocysteine + H(+). Its function is as follows. Specifically methylates the N4 position of cytidine in position 1402 (C1402) of 16S rRNA. The sequence is that of Ribosomal RNA small subunit methyltransferase H from Yersinia pestis (strain Pestoides F).